The primary structure comprises 116 residues: MGTSELLKHIYDINLSYLLLAQRLINDEKASAMFRLGINDEMADTLMQLTLPQMVKLAETNQLICHFRFNDHNTIKVLTQESRVDDLQQIHTGILLSSHLLQQLTSKEENLPKKRA.

The protein belongs to the FlhD family. Homodimer; disulfide-linked. Forms a heterohexamer composed of two FlhC and four FlhD subunits. Each FlhC binds a FlhD dimer, forming a heterotrimer, and a hexamer assembles by dimerization of two heterotrimers.

It localises to the cytoplasm. In terms of biological role, functions in complex with FlhC as a master transcriptional regulator that regulates transcription of several flagellar and non-flagellar operons by binding to their promoter region. Activates expression of class 2 flagellar genes, including fliA, which is a flagellum-specific sigma factor that turns on the class 3 genes. Also regulates genes whose products function in a variety of physiological pathways. The sequence is that of Flagellar transcriptional regulator FlhD from Pectobacterium carotovorum subsp. carotovorum (strain PC1).